The primary structure comprises 1366 residues: DNA-directed RNA polymerase subunit beta' (1366 aa).

Basic residues predominate over residues 1–20 (MTSSKPKKTSRVRKTTKNSK). Positions 1–34 (MTSSKPKKTSRVRKTTKNSKKNNPLTMPALAKTP) are disordered. 4 residues coordinate Zn(2+): cysteine 248, cysteine 315, cysteine 322, and cysteine 325. The tract at residues 1291 to 1366 (YTVDMPQSPS…LQEEGLLSDE (76 aa)) is disordered. The span at 1295–1305 (MPQSPSVSSTA) shows a compositional bias: polar residues. The span at 1354-1366 (LEGLQEEGLLSDE) shows a compositional bias: low complexity.

The protein belongs to the RNA polymerase beta' chain family. RpoC2 subfamily. In cyanobacteria the RNAP catalytic core is composed of 2 alpha, 1 beta, 1 beta', 1 gamma and 1 omega subunit. When a sigma factor is associated with the core the holoenzyme is formed, which can initiate transcription. Zn(2+) is required as a cofactor.

The enzyme catalyses RNA(n) + a ribonucleoside 5'-triphosphate = RNA(n+1) + diphosphate. Its function is as follows. DNA-dependent RNA polymerase catalyzes the transcription of DNA into RNA using the four ribonucleoside triphosphates as substrates. The chain is DNA-directed RNA polymerase subunit beta' from Prochlorococcus marinus (strain MIT 9301).